Here is a 164-residue protein sequence, read N- to C-terminus: Kunitz-type proteinase inhibitor BbCI (164 aa).

It belongs to the protease inhibitor I3 (leguminous Kunitz-type inhibitor) family.

It localises to the secreted. Its function is as follows. Inhibits T.cruzi cruzipain. This is Kunitz-type proteinase inhibitor BbCI from Bauhinia bauhinioides (Perlebia bauhinoides).